An 848-amino-acid polypeptide reads, in one-letter code: Phosphatidate phosphatase LPIN3 (848 aa).

The N-LIP stretch occupies residues 1 to 108 (MNYVGQLAET…VPPRLCTSPI (108 aa)). 3 disordered regions span residues 97-233 (EDVP…SPLR), 271-298 (PEEP…PGVR), and 314-373 (AVDS…NQHL). The Nuclear localization signal signature appears at 135–144 (GRRKRRRRRK). Residues 135-146 (GRRKRRRRRKPR) are compositionally biased toward basic residues. Positions 151 to 164 (DAVDSSSEELEAGA) are enriched in acidic residues. 2 positions are modified to phosphoserine: S155 and S156. The span at 165–191 (ESELTLLEKPTPESPSAQEAEEPSSQP) shows a compositional bias: low complexity. Phosphoserine is present on S218. Residues 271-282 (PEEPSPSSSPSE) show a composition bias toward low complexity. A compositionally biased stretch (polar residues) spans 342–358 (KSWSWTTPESHTPSGHP). S460 bears the Phosphoserine mark. The span at 536-556 (EEHSSQREKAATRKQQGEKTE) shows a compositional bias: basic and acidic residues. Positions 536–568 (EEHSSQREKAATRKQQGEKTEVLSSDDDVPDSP) are disordered. The tract at residues 587-789 (YKKSLRLSSD…RIFTVNPRGE (203 aa)) is C-LIP. A DXDXT motif motif is present at residues 641–645 (DIDGT). Residues 652 to 656 (LGHIL) carry the LXXIL motif motif.

This sequence belongs to the lipin family. Mg(2+) is required as a cofactor. In terms of tissue distribution, significant expression in intestine and other regions of the gastrointestinal tract.

The protein resides in the nucleus. It catalyses the reaction a 1,2-diacyl-sn-glycero-3-phosphate + H2O = a 1,2-diacyl-sn-glycerol + phosphate. With respect to regulation, inhibited by N-ethylmaleimide. Its function is as follows. Magnesium-dependent phosphatidate phosphatase enzyme which catalyzes the conversion of phosphatidic acid to diacylglycerol during triglyceride, phosphatidylcholine and phosphatidylethanolamine biosynthesis therefore regulates fatty acid metabolism. This Mus musculus (Mouse) protein is Phosphatidate phosphatase LPIN3.